The sequence spans 553 residues: Protein PNS1 (553 aa).

The span at Met1 to Pro17 shows a compositional bias: pro residues. Positions Met1 to Pro49 are disordered. The Cytoplasmic segment spans residues Met1–Trp95. The chain crosses the membrane as a helical span at residues Pro96–Leu116. The Extracellular segment spans residues Arg117–Ala143. Asn126 carries an N-linked (GlcNAc...) asparagine glycan. The helical transmembrane segment at Ala144–Leu164 threads the bilayer. The Cytoplasmic segment spans residues Ala165 to Lys170. The helical transmembrane segment at Phe171–Tyr191 threads the bilayer. The Extracellular segment spans residues Leu192–His196. A helical transmembrane segment spans residues Trp197 to Met217. Residues Arg218–Leu243 lie on the Cytoplasmic side of the membrane. A helical membrane pass occupies residues Val244–Val264. Residues Ala265–Arg288 are Extracellular-facing. A helical transmembrane segment spans residues Gly289–Ile309. Over Arg310–Ala346 the chain is Cytoplasmic. The helical transmembrane segment at Leu347–Leu367 threads the bilayer. The Extracellular segment spans residues Arg368–Ser385. Residues Gly386–Ala406 traverse the membrane as a helical segment. At Glu407 to Asn450 the chain is on the cytoplasmic side. A helical membrane pass occupies residues Leu451 to Phe471. The Extracellular portion of the chain corresponds to Leu472–Gly483. Residues Gly484–Ala504 form a helical membrane-spanning segment. Topologically, residues Thr505 to Val553 are cytoplasmic.

It belongs to the CTL (choline transporter-like) family.

Its subcellular location is the cell membrane. Its function is as follows. Probably involved in transport through the plasma membrane. The protein is Protein PNS1 (PNS1) of Eremothecium gossypii (strain ATCC 10895 / CBS 109.51 / FGSC 9923 / NRRL Y-1056) (Yeast).